Reading from the N-terminus, the 117-residue chain is Ig heavy chain V region 23 (117 aa).

The first 19 residues, 1–19 (MGWSCIILFLVAAANGVHS), serve as a signal peptide directing secretion. The segment at 20–49 (QVQLQQPGTELVKPGASVKLSCKASGYTFT) is framework-1. Cys-41 and Cys-115 are oxidised to a cystine. The complementarity-determining-1 stretch occupies residues 50–54 (SYWMH). A framework-2 region spans residues 55-68 (WVKQRPGQGLEWIG). The complementarity-determining-2 stretch occupies residues 69–85 (NINPGNGGTNYNEKFKS). Residues 86-117 (KVTLTVDKSSSTAYTQLSSLTSEDSAVYYCAR) are framework-3.

This Mus musculus (Mouse) protein is Ig heavy chain V region 23.